Consider the following 515-residue polypeptide: Spermatogenesis-associated protein 2 (515 aa).

One can recognise a PUB domain in the interval 78–150; that stretch reads ALHCAFSMLE…VYKLKELVES (73 aa). A PIM motif motif is present at residues 321 to 338; it reads TYFSTQDDVDLYTDSEPR. Positions 429–452 are disordered; it reads GHQTQGLDRLAPVHSKPKPSTTAT.

It belongs to the SPATA2 family. Interacts (via the PIM motif) with RNF31/HOIP (via the PUB domain); the interaction is direct. Interacts (via the PUB domain) with CYLD; the interaction is direct. In terms of tissue distribution, widely expressed, with highest expression in testis, lung and intestine, and lower expression in brain, heart and spleen. Present at high level in Sertoli cells: expressed from stage I to stage XII of the testis seminiferous epithelium (at protein level).

The protein resides in the cytoplasm. It localises to the nucleus. In terms of biological role, bridging factor that mediates the recruitment of CYLD to the LUBAC complex, thereby regulating TNF-alpha-induced necroptosis. Acts as a direct binding intermediate that bridges RNF31/HOIP, the catalytic subunit of the LUBAC complex, and the deubiquitinase (CYLD), thereby recruiting CYLD to the TNF-R1 signaling complex (TNF-RSC). Required to activate the 'Met-1'- (linear) and 'Lys-63'-linked deubiquitinase activities of CYLD. Controls the kinase activity of RIPK1 and TNF-alpha-induced necroptosis by promoting 'Met-1'-linked deubiquitination of RIPK1 by CYLD. This chain is Spermatogenesis-associated protein 2, found in Mus musculus (Mouse).